A 365-amino-acid polypeptide reads, in one-letter code: Glial fibrillary acidic protein (365 aa).

Residues 1–5 (REVDR) form a head region. In terms of domain architecture, IF rod spans 2-310 (EVDRVMGLND…KLLEGEESRI (309 aa)). A coil 1A region spans residues 6-37 (VMGLNDRFASYIEKVRFLEQQNKMLVAELNQL). Residues 38–48 (RGKEPSRLGDI) are linker 1. The coil 1B stretch occupies residues 49–147 (YQEELRELRR…EEEMRQLQEQ (99 aa)). The segment at 148–163 (LIAQQVHVDLDVSKPD) is linker 12. The coil 2A stretch occupies residues 164-185 (LTTALKEIRAQFEAMATSNMQE). The tract at residues 186-189 (TEEW) is linker 2. The tract at residues 190–310 (YRSKFADLTD…KLLEGEESRI (121 aa)) is coil 2B. The interval 311–365 (TVPVQNFTNLQFRDTSLDTKLTPEAHVKRSIVVRTVETRDGEIIKESTTERKDLP) is tail.

Belongs to the intermediate filament family.

The protein is Glial fibrillary acidic protein (gfap) of Carassius auratus (Goldfish).